The chain runs to 476 residues: Glutamyl-tRNA(Gln) amidotransferase subunit A (476 aa).

Residues lysine 69 and serine 144 each act as charge relay system in the active site. Serine 168 acts as the Acyl-ester intermediate in catalysis.

The protein belongs to the amidase family. GatA subfamily. In terms of assembly, heterotrimer of A, B and C subunits.

It catalyses the reaction L-glutamyl-tRNA(Gln) + L-glutamine + ATP + H2O = L-glutaminyl-tRNA(Gln) + L-glutamate + ADP + phosphate + H(+). Functionally, allows the formation of correctly charged Gln-tRNA(Gln) through the transamidation of misacylated Glu-tRNA(Gln) in organisms which lack glutaminyl-tRNA synthetase. The reaction takes place in the presence of glutamine and ATP through an activated gamma-phospho-Glu-tRNA(Gln). The polypeptide is Glutamyl-tRNA(Gln) amidotransferase subunit A (Sulfolobus acidocaldarius (strain ATCC 33909 / DSM 639 / JCM 8929 / NBRC 15157 / NCIMB 11770)).